The following is a 495-amino-acid chain: Glutamyl-tRNA(Gln) amidotransferase subunit A (495 aa).

Residues Lys75 and Ser150 each act as charge relay system in the active site. Ser174 acts as the Acyl-ester intermediate in catalysis.

The protein belongs to the amidase family. GatA subfamily. In terms of assembly, heterotrimer of A, B and C subunits.

The enzyme catalyses L-glutamyl-tRNA(Gln) + L-glutamine + ATP + H2O = L-glutaminyl-tRNA(Gln) + L-glutamate + ADP + phosphate + H(+). In terms of biological role, allows the formation of correctly charged Gln-tRNA(Gln) through the transamidation of misacylated Glu-tRNA(Gln) in organisms which lack glutaminyl-tRNA synthetase. The reaction takes place in the presence of glutamine and ATP through an activated gamma-phospho-Glu-tRNA(Gln). The polypeptide is Glutamyl-tRNA(Gln) amidotransferase subunit A (Ralstonia nicotianae (strain ATCC BAA-1114 / GMI1000) (Ralstonia solanacearum)).